Reading from the N-terminus, the 693-residue chain is Polyribonucleotide nucleotidyltransferase (693 aa).

Residues D489 and D495 each coordinate Mg(2+). The 60-residue stretch at 556–615 (PQIHVMNINPAKIKDVVGRGGATVKGIVEKTGAQIDTSDSGEVKVFAKDKKSMDMAVAMI) folds into the KH domain. The S1 motif domain occupies 625–693 (GQVYKGKIVK…GRVKLSLVAR (69 aa)).

It belongs to the polyribonucleotide nucleotidyltransferase family. Component of the RNA degradosome, which is a multiprotein complex involved in RNA processing and mRNA degradation. Mg(2+) is required as a cofactor.

The protein localises to the cytoplasm. The catalysed reaction is RNA(n+1) + phosphate = RNA(n) + a ribonucleoside 5'-diphosphate. Functionally, involved in mRNA degradation. Catalyzes the phosphorolysis of single-stranded polyribonucleotides processively in the 3'- to 5'-direction. This Francisella tularensis subsp. holarctica (strain FTNF002-00 / FTA) protein is Polyribonucleotide nucleotidyltransferase.